Reading from the N-terminus, the 336-residue chain is Flavonoid 4'-O-methyltransferase 3 (336 aa).

S-adenosyl-L-methionine contacts are provided by Tyr-140 and Asp-203. His-241 acts as the Proton acceptor in catalysis.

This sequence belongs to the class I-like SAM-binding methyltransferase superfamily. Cation-independent O-methyltransferase family. Homodimer. In terms of tissue distribution, expressed in leaves.

It carries out the reaction scutellarein 7-methyl ether + S-adenosyl-L-methionine = ladanein + S-adenosyl-L-homocysteine + H(+). It catalyses the reaction cirsimaritin + S-adenosyl-L-methionine = salvigenin + S-adenosyl-L-homocysteine + H(+). The enzyme catalyses cirsiliol + S-adenosyl-L-methionine = eupatorin + S-adenosyl-L-homocysteine + H(+). The catalysed reaction is genkwanin + S-adenosyl-L-methionine = apigenin 4',7-dimethyl ether + S-adenosyl-L-homocysteine. The protein operates within flavonoid metabolism. Its activity is regulated as follows. Substrate inhibition by genkwanin (GENK) at concentrations above 2.5 mM. Flavonoid 4'-O-methyltransferase involved in the biosynthesis of polymethoxylated flavonoids natural products such as nevadensin and salvigenin, aroma compounds which contribute to the flavor of sweet basil, and exhibit pharmacological activities such as anti-allergic, anti-oxidant, antibacterial, anti-proliferative, and anti-inflammatory effects. Catalyzes S-adenosylmethionine-dependent regioselective 4'-O-methylation of flavonoids; active on various hydroxylated flavonoid substrates, including scutellarein-7-methyl ether (SCU7Me) and cirsimaritin (CIRM), and, with a lower efficiency, hispidulin, ladanein (LAD), cirsioliol (CIRL) and genkwanin (GENK). This Ocimum basilicum (Sweet basil) protein is Flavonoid 4'-O-methyltransferase 3.